A 318-amino-acid chain; its full sequence is D-alanine--D-alanine ligase B (318 aa).

The ATP-grasp domain occupies 117–315 (KQVWLSLGLS…FEALVWRVLE (199 aa)). 146–201 (AEQIGLPVIVKPANEGSSVGVSRVFDQAQLDEAVTLAARYDGALLMEQLIEGDELT) is a binding site for ATP. Mg(2+) contacts are provided by D268, E282, and N284.

It belongs to the D-alanine--D-alanine ligase family. It depends on Mg(2+) as a cofactor. Mn(2+) serves as cofactor.

The protein resides in the cytoplasm. The enzyme catalyses 2 D-alanine + ATP = D-alanyl-D-alanine + ADP + phosphate + H(+). The protein operates within cell wall biogenesis; peptidoglycan biosynthesis. In terms of biological role, cell wall formation. This chain is D-alanine--D-alanine ligase B, found in Xanthomonas campestris pv. campestris (strain ATCC 33913 / DSM 3586 / NCPPB 528 / LMG 568 / P 25).